A 393-amino-acid chain; its full sequence is Dual specificity mitogen-activated protein kinase kinase 1 (393 aa).

The disordered stretch occupies residues 1–27; it reads MPKKKPTPIQLNPAPDGSAVNGTSSAE. Residues 68-361 enclose the Protein kinase domain; sequence FEKISELGAG…LKQLMVHAFI (294 aa). ATP-binding positions include 74-82, K97, 143-146, and 150-153; these read LGAGNGGVV, MEHM, and SLDQ. Position 97 (K97) interacts with U0126. 144-146 contacts K-252a; sequence EHM. D190 functions as the Proton acceptor in the catalytic mechanism. ATP contacts are provided by residues 192–195 and D208; that span reads KPSN. S194 is a binding site for K-252a. A U0126-binding site is contributed by 208–211; it reads DFGV. A phosphoserine; by BRAF and RAF1 mark is found at S218 and S222. Positions 270–307 are RAF1-binding; the sequence is ELELMFGCQVEGDAAETPPRPRTPGRPLSSYGMDSRPP. T286 bears the Phosphothreonine mark. Residue T292 is modified to Phosphothreonine; by MAPK1. Phosphoserine; by PAK is present on S298.

It belongs to the protein kinase superfamily. STE Ser/Thr protein kinase family. MAP kinase kinase subfamily. As to quaternary structure, found in a complex with at least BRAF, HRAS, MAP2K1, MAPK3/ERK1 and RGS14. Forms a heterodimer with MAP2K2/MEK2. Forms heterodimers with KSR2 which further dimerize to form tetramers. Interacts with KSR1 or KSR2 and BRAF; the interaction with KSR1 or KSR2 mediates KSR1-BRAF or KSR2-BRAF dimerization. Interacts with ARBB2, LAMTOR3 and RAF1. Interacts with MAPK1/ERK2. Interacts with MORG1. Interacts with PPARG. Interacts with isoform 1 of VRK2. Interacts with SGK1. Interacts with BIRC6/bruce. Interacts with KAT7; the interaction promotes KAT7 phosphorylation. Interacts with RAF1 and NEK10; the interaction is required for ERK1/2-signaling pathway activation in response to UV irradiation. Interacts with TRAF3IP3. Interacts with MOS. (Microbial infection) Interacts with Yersinia YopJ. Phosphorylation at Ser-218 and Ser-222 by MAP kinase kinase kinases (BRAF or MEKK1) positively regulates kinase activity. Also phosphorylated at Thr-292 by MAPK1/ERK2 and at Ser-298 by PAK. MAPK1/ERK2 phosphorylation of Thr-292 occurs in response to cellular adhesion and leads to inhibition of Ser-298 phosphorylation by PAK. Autophosphorylated at Ser-218 and Ser-222, autophosphosphorylation is promoted by NEK10 following UV irradiation. Post-translationally, (Microbial infection) Acetylation by Yersinia YopJ prevents phosphorylation and activation, thus blocking the MAPK signaling pathway. As to expression, widely expressed, with extremely low levels in brain.

It localises to the cytoplasm. It is found in the cytoskeleton. Its subcellular location is the microtubule organizing center. The protein localises to the centrosome. The protein resides in the spindle pole body. It localises to the nucleus. It is found in the membrane. It carries out the reaction L-seryl-[protein] + ATP = O-phospho-L-seryl-[protein] + ADP + H(+). The enzyme catalyses L-threonyl-[protein] + ATP = O-phospho-L-threonyl-[protein] + ADP + H(+). It catalyses the reaction L-tyrosyl-[protein] + ATP = O-phospho-L-tyrosyl-[protein] + ADP + H(+). With respect to regulation, ras proteins such as HRAS mediate the activation of RAF proteins such as RAF1 or BRAF which in turn activate extracellular signal-regulated kinases (ERK) through MAPK (mitogen-activated protein kinases) and ERK kinases MAP2K1/MEK1 and MAP2K2/MEK2. Activation occurs through phosphorylation of Ser-218 and Ser-222. MAP2K1/MEK1 binds KSR1 or KSR2 releasing the inhibitory intramolecular interaction between KSR1 or KSR2 protein kinase and N-terminal domains. This allows KSR1 or KSR2 dimerization with BRAF leading to BRAF activation and phosphorylation of MAP2K1. MAP2K1/MEK1 is also the target of negative feed-back regulation by its substrate kinases, such as MAPK1/ERK2. These phosphorylate MAP2K1/MEK1 on Thr-292, thereby facilitating dephosphorylation of the activating residues Ser-218 and Ser-222. Inhibited by serine/threonine phosphatase 2A. Many inhibitors have been identified including pyrrole derivatives, TAK-733 (one of a series of 8-methylpyrido[2,3-d]pyrimidine-4,7(3H,8H)-dione derivatives), CH4987655 and RDEA119/BAY 869766. Its function is as follows. Dual specificity protein kinase which acts as an essential component of the MAP kinase signal transduction pathway. Binding of extracellular ligands such as growth factors, cytokines and hormones to their cell-surface receptors activates RAS and this initiates RAF1 activation. RAF1 then further activates the dual-specificity protein kinases MAP2K1/MEK1 and MAP2K2/MEK2. Both MAP2K1/MEK1 and MAP2K2/MEK2 function specifically in the MAPK/ERK cascade, and catalyze the concomitant phosphorylation of a threonine and a tyrosine residue in a Thr-Glu-Tyr sequence located in the extracellular signal-regulated kinases MAPK3/ERK1 and MAPK1/ERK2, leading to their activation and further transduction of the signal within the MAPK/ERK cascade. Activates BRAF in a KSR1 or KSR2-dependent manner; by binding to KSR1 or KSR2 releases the inhibitory intramolecular interaction between KSR1 or KSR2 protein kinase and N-terminal domains which promotes KSR1 or KSR2-BRAF dimerization and BRAF activation. Depending on the cellular context, this pathway mediates diverse biological functions such as cell growth, adhesion, survival and differentiation, predominantly through the regulation of transcription, metabolism and cytoskeletal rearrangements. One target of the MAPK/ERK cascade is peroxisome proliferator-activated receptor gamma (PPARG), a nuclear receptor that promotes differentiation and apoptosis. MAP2K1/MEK1 has been shown to export PPARG from the nucleus. The MAPK/ERK cascade is also involved in the regulation of endosomal dynamics, including lysosome processing and endosome cycling through the perinuclear recycling compartment (PNRC), as well as in the fragmentation of the Golgi apparatus during mitosis. This Homo sapiens (Human) protein is Dual specificity mitogen-activated protein kinase kinase 1.